The primary structure comprises 1136 residues: Unconventional myosin-Ib (1136 aa).

Positions 15–701 constitute a Myosin motor domain; the sequence is IGVGDTVLLE…TLFQLEDLRK (687 aa). S60 carries the phosphoserine modification. Position 108-115 (108-115) interacts with ATP; that stretch reads GESGAGKT. K287 is covalently cross-linked (Glycyl lysine isopeptide (Lys-Gly) (interchain with G-Cter in SUMO1); alternate). A Glycyl lysine isopeptide (Lys-Gly) (interchain with G-Cter in SUMO2); alternate cross-link involves residue K287. The interval 592-599 is actin-binding; it reads YIRCIKPN. IQ domains are found at residues 704-729, 730-750, 750-778, 780-807, 808-837, and 837-866; these read LEDLATLIQKIYRGWKCRTHFLLMKR, SQVVIAAWYRRYAQQKRYQQI, IKSSALVIQSYIRGWKARKILRELKHQKR, KEAATTIAAYWHGTQARKERRRLKDEAR, NKHAIAVIWAFWLGSKARRELKRLKEEARR, and RKHAVAVIWAYWLGLKVRREYRKFFRANAG. The TH1 domain maps to 952–1136; sequence KALYPSSVGQ…NNRLLEVAVP (185 aa).

The protein belongs to the TRAFAC class myosin-kinesin ATPase superfamily. Myosin family.

Functionally, motor protein that may participate in process critical to neuronal development and function such as cell migration, neurite outgrowth and vesicular transport. This chain is Unconventional myosin-Ib (Myo1b), found in Rattus norvegicus (Rat).